The sequence spans 383 residues: 8-amino-7-oxononanoate synthase (383 aa).

R23 provides a ligand contact to substrate. 110 to 111 (GF) contacts pyridoxal 5'-phosphate. H135 lines the substrate pocket. Residues S181, H209, and T235 each coordinate pyridoxal 5'-phosphate. K238 is modified (N6-(pyridoxal phosphate)lysine). T351 is a substrate binding site.

The protein belongs to the class-II pyridoxal-phosphate-dependent aminotransferase family. BioF subfamily. In terms of assembly, homodimer. It depends on pyridoxal 5'-phosphate as a cofactor.

The catalysed reaction is 6-carboxyhexanoyl-[ACP] + L-alanine + H(+) = (8S)-8-amino-7-oxononanoate + holo-[ACP] + CO2. It functions in the pathway cofactor biosynthesis; biotin biosynthesis. In terms of biological role, catalyzes the decarboxylative condensation of pimeloyl-[acyl-carrier protein] and L-alanine to produce 8-amino-7-oxononanoate (AON), [acyl-carrier protein], and carbon dioxide. This Aliivibrio salmonicida (strain LFI1238) (Vibrio salmonicida (strain LFI1238)) protein is 8-amino-7-oxononanoate synthase.